A 421-amino-acid polypeptide reads, in one-letter code: Histidine--tRNA ligase (421 aa).

This sequence belongs to the class-II aminoacyl-tRNA synthetase family. Homodimer.

The protein resides in the cytoplasm. It catalyses the reaction tRNA(His) + L-histidine + ATP = L-histidyl-tRNA(His) + AMP + diphosphate + H(+). This chain is Histidine--tRNA ligase, found in Coxiella burnetii (strain CbuK_Q154) (Coxiella burnetii (strain Q154)).